The chain runs to 100 residues: uncharacterized protein (100 aa).

An HTH arsR-type domain is found at 1–100; it reads MEPIEVFKAL…KLADFLKTEI (100 aa). The H-T-H motif DNA-binding region spans 44–67; that stretch reads VSQITDKLKMTQSTASQYLTILLR.

This is an uncharacterized protein from Bacillus subtilis (strain 168).